Consider the following 821-residue polypeptide: Glycerol-3-phosphate acyltransferase (821 aa).

Positions 310–315 (CHRSHM) match the HXXXXD motif motif.

This sequence belongs to the GPAT/DAPAT family.

Its subcellular location is the cell membrane. It carries out the reaction sn-glycerol 3-phosphate + an acyl-CoA = a 1-acyl-sn-glycero-3-phosphate + CoA. It functions in the pathway phospholipid metabolism; CDP-diacylglycerol biosynthesis; CDP-diacylglycerol from sn-glycerol 3-phosphate: step 1/3. This is Glycerol-3-phosphate acyltransferase from Baumannia cicadellinicola subsp. Homalodisca coagulata.